The primary structure comprises 355 residues: Probable poly-beta-1,6-N-acetyl-D-glucosamine export protein (355 aa).

A run of 10 helical transmembrane segments spans residues Ala-13–Leu-30, Tyr-45–Leu-67, Ile-74–Ser-96, Val-116–Ile-138, Leu-145–Leu-167, Met-187–Asn-204, Phe-211–Val-233, Ser-243–Val-262, Met-269–Ile-291, and Thr-306–Leu-328.

This sequence belongs to the acyltransferase 3 family.

The protein localises to the cell membrane. Its function is as follows. Presumably involved in the export of the biofilm adhesin polysaccharide poly-beta-1,6-N-acetyl-D-glucosamine (PNAG, also referred to as PIA) across the cell membrane. The sequence is that of Probable poly-beta-1,6-N-acetyl-D-glucosamine export protein (icaC) from Staphylococcus epidermidis.